The following is a 108-amino-acid chain: ATP-dependent Clp protease adapter protein ClpS (108 aa).

Basic and acidic residues predominate over residues Met1–Val15. Positions Met1–Pro22 are disordered.

This sequence belongs to the ClpS family. As to quaternary structure, binds to the N-terminal domain of the chaperone ClpA.

Its function is as follows. Involved in the modulation of the specificity of the ClpAP-mediated ATP-dependent protein degradation. This is ATP-dependent Clp protease adapter protein ClpS from Stenotrophomonas maltophilia (strain K279a).